Here is a 449-residue protein sequence, read N- to C-terminus: Bifunctional protein GlmU (449 aa).

The pyrophosphorylase stretch occupies residues 1–231 (MVRNCLSIVL…FDNVIGINNC (231 aa)). UDP-N-acetyl-alpha-D-glucosamine contacts are provided by residues 10-13 (LAAG), lysine 24, glutamine 77, and 82-83 (GT). Aspartate 107 contacts Mg(2+). 4 residues coordinate UDP-N-acetyl-alpha-D-glucosamine: glycine 143, glutamate 157, asparagine 172, and asparagine 229. Asparagine 229 contributes to the Mg(2+) binding site. A linker region spans residues 232–252 (FELFEADALWQKRKARDLMLS). An N-acetyltransferase region spans residues 253 to 449 (GVTILKPESV…AHLSKNKRNK (197 aa)). Positions 318 and 336 each coordinate UDP-N-acetyl-alpha-D-glucosamine. Histidine 348 functions as the Proton acceptor in the catalytic mechanism. UDP-N-acetyl-alpha-D-glucosamine is bound by residues tyrosine 351 and asparagine 362. Residues alanine 365, 371 to 372 (NY), serine 390, serine 408, and arginine 425 contribute to the acetyl-CoA site.

The protein in the N-terminal section; belongs to the N-acetylglucosamine-1-phosphate uridyltransferase family. In the C-terminal section; belongs to the transferase hexapeptide repeat family. In terms of assembly, homotrimer. Requires Mg(2+) as cofactor.

The protein localises to the cytoplasm. It carries out the reaction alpha-D-glucosamine 1-phosphate + acetyl-CoA = N-acetyl-alpha-D-glucosamine 1-phosphate + CoA + H(+). The enzyme catalyses N-acetyl-alpha-D-glucosamine 1-phosphate + UTP + H(+) = UDP-N-acetyl-alpha-D-glucosamine + diphosphate. It participates in nucleotide-sugar biosynthesis; UDP-N-acetyl-alpha-D-glucosamine biosynthesis; N-acetyl-alpha-D-glucosamine 1-phosphate from alpha-D-glucosamine 6-phosphate (route II): step 2/2. It functions in the pathway nucleotide-sugar biosynthesis; UDP-N-acetyl-alpha-D-glucosamine biosynthesis; UDP-N-acetyl-alpha-D-glucosamine from N-acetyl-alpha-D-glucosamine 1-phosphate: step 1/1. The protein operates within bacterial outer membrane biogenesis; LPS lipid A biosynthesis. Its function is as follows. Catalyzes the last two sequential reactions in the de novo biosynthetic pathway for UDP-N-acetylglucosamine (UDP-GlcNAc). The C-terminal domain catalyzes the transfer of acetyl group from acetyl coenzyme A to glucosamine-1-phosphate (GlcN-1-P) to produce N-acetylglucosamine-1-phosphate (GlcNAc-1-P), which is converted into UDP-GlcNAc by the transfer of uridine 5-monophosphate (from uridine 5-triphosphate), a reaction catalyzed by the N-terminal domain. In Bartonella bacilliformis (strain ATCC 35685 / KC583 / Herrer 020/F12,63), this protein is Bifunctional protein GlmU.